Here is a 371-residue protein sequence, read N- to C-terminus: Cysteine proteinase EP-B 1 (371 aa).

The N-terminal stretch at 1–28 is a signal peptide; that stretch reads MGLLSKKLLVASMVAAVLAVAAVELCSA. Residues 29 to 133 constitute a propeptide, activation peptide; it reads IPMEDKDLES…FMYAALNVSD (105 aa). N-linked (GlcNAc...) asparagine glycosylation occurs at N130. Cystine bridges form between C155/C197, C189/C230, and C291/C343. C158 is an active-site residue. Active-site residues include H297 and N318.

Belongs to the peptidase C1 family.

This chain is Cysteine proteinase EP-B 1, found in Hordeum vulgare (Barley).